The chain runs to 467 residues: Argininosuccinate lyase (467 aa).

Residues S27, N114, and T159 each contribute to the 2-(N(omega)-L-arginino)succinate site. Catalysis depends on H160, which acts as the Proton acceptor. The Proton donor role is filled by S281. Residues N289, Y321, Q326, and K329 each coordinate 2-(N(omega)-L-arginino)succinate.

This sequence belongs to the lyase 1 family. Argininosuccinate lyase subfamily. In terms of assembly, homotetramer.

It carries out the reaction 2-(N(omega)-L-arginino)succinate = fumarate + L-arginine. The protein operates within amino-acid biosynthesis; L-arginine biosynthesis; L-arginine from L-ornithine and carbamoyl phosphate: step 3/3. It functions in the pathway nitrogen metabolism; urea cycle; L-arginine and fumarate from (N(omega)-L-arginino)succinate: step 1/1. This chain is Argininosuccinate lyase (ASL), found in Aquarana catesbeiana (American bullfrog).